A 369-amino-acid polypeptide reads, in one-letter code: Anthranilate phosphoribosyltransferase (369 aa).

Residues Gly-85, 88–89 (GD), Thr-93, 95–98 (NLST), 113–121 (KHGNRAASS), and Ser-125 each bind 5-phospho-alpha-D-ribose 1-diphosphate. Residue Gly-85 participates in anthranilate binding. Position 97 (Ser-97) interacts with Mg(2+). Anthranilate is bound at residue Asn-116. Residue Arg-171 coordinates anthranilate. Residues Asp-229 and Glu-230 each coordinate Mg(2+).

Belongs to the anthranilate phosphoribosyltransferase family. As to quaternary structure, homodimer. It depends on Mg(2+) as a cofactor.

The enzyme catalyses N-(5-phospho-beta-D-ribosyl)anthranilate + diphosphate = 5-phospho-alpha-D-ribose 1-diphosphate + anthranilate. Its pathway is amino-acid biosynthesis; L-tryptophan biosynthesis; L-tryptophan from chorismate: step 2/5. In terms of biological role, catalyzes the transfer of the phosphoribosyl group of 5-phosphorylribose-1-pyrophosphate (PRPP) to anthranilate to yield N-(5'-phosphoribosyl)-anthranilate (PRA). The chain is Anthranilate phosphoribosyltransferase from Frankia alni (strain DSM 45986 / CECT 9034 / ACN14a).